A 263-amino-acid polypeptide reads, in one-letter code: Phosphatidylglycerol--prolipoprotein diacylglyceryl transferase (263 aa).

Transmembrane regions (helical) follow at residues 15-35, 52-72, 83-103, and 112-132; these read ISIH…VYLA, FILL…VIFQ, IFAI…GAAV, and AIAV…AQSI. A 1,2-diacyl-sn-glycero-3-phospho-(1'-sn-glycerol) is bound at residue Arg134. The next 3 helical transmembrane spans lie at 170 to 190, 200 to 220, and 227 to 247; these read VPTF…ILGL, GDVT…IEGM, and FVGL…GAVL.

The protein belongs to the Lgt family.

It is found in the cell membrane. The enzyme catalyses L-cysteinyl-[prolipoprotein] + a 1,2-diacyl-sn-glycero-3-phospho-(1'-sn-glycerol) = an S-1,2-diacyl-sn-glyceryl-L-cysteinyl-[prolipoprotein] + sn-glycerol 1-phosphate + H(+). It participates in protein modification; lipoprotein biosynthesis (diacylglyceryl transfer). Functionally, catalyzes the transfer of the diacylglyceryl group from phosphatidylglycerol to the sulfhydryl group of the N-terminal cysteine of a prolipoprotein, the first step in the formation of mature lipoproteins. This is Phosphatidylglycerol--prolipoprotein diacylglyceryl transferase from Streptococcus thermophilus (strain CNRZ 1066).